We begin with the raw amino-acid sequence, 149 residues long: Large ribosomal subunit protein uL15 (149 aa).

2 stretches are compositionally biased toward basic residues: residues 1–14 and 21–30; these read MPTR…HRGH and RVGKHRKHPG. The interval 1 to 43 is disordered; that stretch reads MPTRFSKTRKHRGHVSAGKGRVGKHRKHPGGRGMAGGQHHHRT.

It belongs to the universal ribosomal protein uL15 family. As to quaternary structure, component of the large ribosomal subunit (LSU). Mature N.crassa ribosomes consist of a small (40S) and a large (60S) subunit. The 40S small subunit contains 1 molecule of ribosomal RNA (18S rRNA) and at least 32 different proteins. The large 60S subunit contains 3 rRNA molecules (26S, 5.8S and 5S rRNA) and at least 42 different proteins.

It is found in the cytoplasm. In terms of biological role, component of the ribosome, a large ribonucleoprotein complex responsible for the synthesis of proteins in the cell. The small ribosomal subunit (SSU) binds messenger RNAs (mRNAs) and translates the encoded message by selecting cognate aminoacyl-transfer RNA (tRNA) molecules. The large subunit (LSU) contains the ribosomal catalytic site termed the peptidyl transferase center (PTC), which catalyzes the formation of peptide bonds, thereby polymerizing the amino acids delivered by tRNAs into a polypeptide chain. The nascent polypeptides leave the ribosome through a tunnel in the LSU and interact with protein factors that function in enzymatic processing, targeting, and the membrane insertion of nascent chains at the exit of the ribosomal tunnel. The sequence is that of Large ribosomal subunit protein uL15 (rpl-28) from Neurospora crassa (strain ATCC 24698 / 74-OR23-1A / CBS 708.71 / DSM 1257 / FGSC 987).